A 587-amino-acid polypeptide reads, in one-letter code: Formate--tetrahydrofolate ligase (587 aa).

Residue 73–80 (TPLGEGKS) participates in ATP binding.

The protein belongs to the formate--tetrahydrofolate ligase family.

The enzyme catalyses (6S)-5,6,7,8-tetrahydrofolate + formate + ATP = (6R)-10-formyltetrahydrofolate + ADP + phosphate. It functions in the pathway one-carbon metabolism; tetrahydrofolate interconversion. This is Formate--tetrahydrofolate ligase from Syntrophobacter fumaroxidans (strain DSM 10017 / MPOB).